A 266-amino-acid chain; its full sequence is MTAQFRFPRFFVTTPGPCPYLAGRTERKVFTELSGPNAAELNDALGRIGFRRSQGVAYRPTCVDCQACVSVRVVANEFRPNASQRKLIRRHADLDISVCKPWTTEEQFALLRRYLKARHPGGGMAQMDELDFADMVEQTPVKTHVVEYREPATNGRPGKLVGACLTDTQSDGVSMVYSFFETEDDSRPGLGTFIILEHIRRAAEGGLPYVYLGYWVEGSARMQYKTRFQPLERLSAGGWHRFEAPPLPAEGTGAGFPAPSKLGQLI.

It belongs to the R-transferase family. Bpt subfamily.

The protein resides in the cytoplasm. It catalyses the reaction N-terminal L-glutamyl-[protein] + L-leucyl-tRNA(Leu) = N-terminal L-leucyl-L-glutamyl-[protein] + tRNA(Leu) + H(+). The catalysed reaction is N-terminal L-aspartyl-[protein] + L-leucyl-tRNA(Leu) = N-terminal L-leucyl-L-aspartyl-[protein] + tRNA(Leu) + H(+). In terms of biological role, functions in the N-end rule pathway of protein degradation where it conjugates Leu from its aminoacyl-tRNA to the N-termini of proteins containing an N-terminal aspartate or glutamate. The polypeptide is Aspartate/glutamate leucyltransferase (Rhizorhabdus wittichii (strain DSM 6014 / CCUG 31198 / JCM 15750 / NBRC 105917 / EY 4224 / RW1) (Sphingomonas wittichii)).